Reading from the N-terminus, the 197-residue chain is Guanylyl cyclase-activating protein 2 (197 aa).

Residue Gly-2 is the site of N-myristoyl glycine attachment. EF-hand domains follow at residues 15 to 50 (DVAE…QDNQ), 51 to 86 (EAAD…VLRG), 87 to 122 (KLEH…IYNL), and 138 to 173 (SPEQ…DKWV). Ca(2+)-binding residues include Asp-64, Asn-66, Asp-68, Thr-70, Glu-75, Asp-100, Asp-102, Asn-104, Cys-106, Glu-111, Asp-151, Asn-153, Asp-155, Gln-157, and Glu-162.

In terms of tissue distribution, low expression in retina.

Its function is as follows. Stimulates guanylyl cyclase 1 (GC1) and GC2 when free calcium ions concentration is low and inhibits guanylyl cyclases when free calcium ions concentration is elevated. This Ca(2+)-sensitive regulation of guanylyl cyclase (GC) is a key event in recovery of the dark state of rod photoreceptors following light exposure. The chain is Guanylyl cyclase-activating protein 2 (GUCA1B) from Lithobates pipiens (Northern leopard frog).